We begin with the raw amino-acid sequence, 622 residues long: Peptidoglycan O-acetyltransferase OatA (622 aa).

11 helical membrane passes run 11 to 31 (YVPSIDGLRALAVIAVIAYHL), 39 to 59 (GFIGVDIFFVLSGYLITNILL), 81 to 101 (LIPAVYVMIVVVVIYSVFFHP), 143 to 163 (LWSLAIEEQFYLIWPAFLLVF), 173 to 193 (LLKIVIGLGLLSAVWMTILYV), 212 to 232 (LLSGCALAFVWPFNRLSPVVP), 237 to 257 (AVLNIAGTISILCFILFTAFV), 267 to 287 (GGLLFVAILGVIMIATISHPA), 307 to 327 (YGIYLWHYPIITLTTPVLEIT), 334 to 354 (AILQVAATFIIAELSFRFIET), and 387 to 407 (IAGVVAVLAIFTLGMSNVLSV). A disordered region spans residues 412–467 (EKQQTSVKTTTSTPDEKKDDKKEDKATKDKEADSNKASEQKETQKPDNKNKSAATP). Residues 413–424 (KQQTSVKTTTST) are compositionally biased toward low complexity. Positions 425–461 (PDEKKDDKKEDKATKDKEADSNKASEQKETQKPDNKN) are enriched in basic and acidic residues. Residues Ser480, Asp600, and His603 contribute to the active site.

It belongs to the acyltransferase 3 family.

It is found in the cell membrane. The protein localises to the secreted. It localises to the cell wall. Functionally, responsible for O-acetylation at the C6-hydroxyl group of N-acetylmuramyl residues, forming the corresponding N,6-O-diacetylmuramic acid of the peptidoglycan. O-acetylation of the peptidoglycan is the major determinant for lysozyme resistance. Critical for virulence and escape from innate immune response of the host. Involved at both early and later stages of listeriosis in the mouse model of infection. Required for successful host colonization and for intracellular survival of bacteria in macrophages of the infected host. Controls the production of inflammatory mediators in the liver of the infected host. Confers resistance to host antimicrobial molecules and to cell wall-targeting molecules such as beta-lactam antibiotics and bacteriocins. This is Peptidoglycan O-acetyltransferase OatA from Listeria monocytogenes serovar 1/2a (strain ATCC BAA-679 / EGD-e).